The following is a 232-amino-acid chain: MDKSEQDQLKKEAATKAAMMVESGSVLGVGTGSTVAFFIDALGERKEKENFSLKHIVTTSNRSKKQLEGLGFQVDELADIDQADLTVDGADRVDDNLDGIKGGGGALTLEKNVAINSKKVIWIVDESKLVHHLSGFPLPVEVLPVSAEQNFKRFEEEGLKPQWRLDDNGKRYVTHYGNYIIDLAADPTPVPHGLADYLDHTVGVVEHGLFLDMCDEVIIAHSDGTIEDKKRK.

Substrate contacts are provided by residues 31 to 34, 88 to 91, and 101 to 104; these read TGST, DGAD, and KGGG. The Proton acceptor role is filled by Glu-110. Lys-128 contacts substrate.

The protein belongs to the ribose 5-phosphate isomerase family. Homodimer.

It catalyses the reaction aldehydo-D-ribose 5-phosphate = D-ribulose 5-phosphate. It functions in the pathway carbohydrate degradation; pentose phosphate pathway; D-ribose 5-phosphate from D-ribulose 5-phosphate (non-oxidative stage): step 1/1. Catalyzes the reversible conversion of ribose-5-phosphate to ribulose 5-phosphate. The polypeptide is Ribose-5-phosphate isomerase A (Lactobacillus gasseri (strain ATCC 33323 / DSM 20243 / BCRC 14619 / CIP 102991 / JCM 1131 / KCTC 3163 / NCIMB 11718 / NCTC 13722 / AM63)).